A 101-amino-acid polypeptide reads, in one-letter code: Small ribosomal subunit protein bS18c (101 aa).

It belongs to the bacterial ribosomal protein bS18 family. In terms of assembly, part of the 30S ribosomal subunit.

The protein localises to the plastid. It localises to the chloroplast. This Populus alba (White poplar) protein is Small ribosomal subunit protein bS18c.